A 647-amino-acid chain; its full sequence is DNA mismatch repair protein MutL (647 aa).

Belongs to the DNA mismatch repair MutL/HexB family.

Functionally, this protein is involved in the repair of mismatches in DNA. It is required for dam-dependent methyl-directed DNA mismatch repair. May act as a 'molecular matchmaker', a protein that promotes the formation of a stable complex between two or more DNA-binding proteins in an ATP-dependent manner without itself being part of a final effector complex. This Bacillus thuringiensis (strain Al Hakam) protein is DNA mismatch repair protein MutL.